Here is a 186-residue protein sequence, read N- to C-terminus: Probable chorismate pyruvate-lyase (186 aa).

Arg80, Leu118, and Glu170 together coordinate substrate.

It belongs to the UbiC family.

Its subcellular location is the cytoplasm. It catalyses the reaction chorismate = 4-hydroxybenzoate + pyruvate. It participates in cofactor biosynthesis; ubiquinone biosynthesis. Its function is as follows. Removes the pyruvyl group from chorismate, with concomitant aromatization of the ring, to provide 4-hydroxybenzoate (4HB) for the ubiquinone pathway. In Pseudomonas syringae pv. tomato (strain ATCC BAA-871 / DC3000), this protein is Probable chorismate pyruvate-lyase.